A 774-amino-acid polypeptide reads, in one-letter code: Dapper homolog 2 (774 aa).

Positions Pro67–Lys93 form a coiled coil. Disordered regions lie at residues Arg188 to Ala225, Thr295 to Thr319, Thr345 to Lys500, and Cys624 to Ser710. The span at Val438–Ala452 shows a compositional bias: polar residues. The span at Arg637–Pro648 shows a compositional bias: low complexity. 2 stretches are compositionally biased toward basic and acidic residues: residues Ala655–Pro672 and Ser686–Ser700. The short motif at Met771 to Val774 is the PDZ-binding element.

This sequence belongs to the dapper family. In terms of assembly, can form homodimers and heterodimers with DACT1 or DACT3. Interacts with CSNK1D, PKA catalytic subunit, PKC-type kinase, CSNK2B, DVL1, DVL2, DVL3, VANGL1, VANGL2, TGFBR1, CTNNB1, CTNND2, CTNND1, LEF1, TCF7, TCF7L1 and HDAC1.

Functionally, involved in regulation of intracellular signaling pathways during development. Negatively regulates the Nodal signaling pathway, possibly by promoting the lysosomal degradation of Nodal receptors, such as TGFBR1. May be involved in control of the morphogenetic behavior of kidney ureteric bud cells by keeping cells epithelial and restraining their mesenchymal character. May play an inhibitory role in the re-epithelialization of skin wounds by attenuating TGF-beta signaling. This chain is Dapper homolog 2 (DACT2), found in Homo sapiens (Human).